We begin with the raw amino-acid sequence, 350 residues long: Phosphoribosylformylglycinamidine cyclo-ligase (350 aa).

This sequence belongs to the AIR synthase family.

The protein resides in the cytoplasm. It catalyses the reaction 2-formamido-N(1)-(5-O-phospho-beta-D-ribosyl)acetamidine + ATP = 5-amino-1-(5-phospho-beta-D-ribosyl)imidazole + ADP + phosphate + H(+). Its pathway is purine metabolism; IMP biosynthesis via de novo pathway; 5-amino-1-(5-phospho-D-ribosyl)imidazole from N(2)-formyl-N(1)-(5-phospho-D-ribosyl)glycinamide: step 2/2. This chain is Phosphoribosylformylglycinamidine cyclo-ligase, found in Cupriavidus taiwanensis (strain DSM 17343 / BCRC 17206 / CCUG 44338 / CIP 107171 / LMG 19424 / R1) (Ralstonia taiwanensis (strain LMG 19424)).